Consider the following 82-residue polypeptide: Beta-defensin 113 (82 aa).

Residues M1–C16 form the signal peptide. 3 disulfides stabilise this stretch: C35–C61, C42–C56, and C46–C62.

Belongs to the beta-defensin family.

The protein resides in the secreted. Has antibacterial activity. This is Beta-defensin 113 (DEFB113) from Homo sapiens (Human).